We begin with the raw amino-acid sequence, 812 residues long: Lon protease (812 aa).

The Lon N-terminal domain maps to 22 to 215; it reads YAVLPLRDIV…KALSFMEAEI (194 aa). 367-374 contacts ATP; that stretch reads GPPGVGKT. Positions 602 to 783 constitute a Lon proteolytic domain; the sequence is EDQVGVVTGL…GEVLKHTLVR (182 aa). Catalysis depends on residues Ser-689 and Lys-732. Residues 787-812 are disordered; sequence PIEWTEQENPTAVPPVEDEAGASLAH.

The protein belongs to the peptidase S16 family. Homohexamer. Organized in a ring with a central cavity.

It is found in the cytoplasm. The enzyme catalyses Hydrolysis of proteins in presence of ATP.. Functionally, ATP-dependent serine protease that mediates the selective degradation of mutant and abnormal proteins as well as certain short-lived regulatory proteins. Required for cellular homeostasis and for survival from DNA damage and developmental changes induced by stress. Degrades polypeptides processively to yield small peptide fragments that are 5 to 10 amino acids long. Binds to DNA in a double-stranded, site-specific manner. The polypeptide is Lon protease (Brucella suis biovar 1 (strain 1330)).